We begin with the raw amino-acid sequence, 504 residues long: Arabinose import ATP-binding protein AraG (504 aa).

ABC transporter domains follow at residues 8–243 (LSFR…MVGR) and 256–499 (YGEE…MPKV). 40–47 (GENGAGKS) contacts ATP.

Belongs to the ABC transporter superfamily. Arabinose importer (TC 3.A.1.2.2) family. As to quaternary structure, the complex is composed of two ATP-binding proteins (AraG), two transmembrane proteins (AraH) and a solute-binding protein (AraF).

The protein localises to the cell inner membrane. It carries out the reaction L-arabinose(out) + ATP + H2O = L-arabinose(in) + ADP + phosphate + H(+). In terms of biological role, part of the ABC transporter complex AraFGH involved in arabinose import. Responsible for energy coupling to the transport system. This Escherichia coli O157:H7 protein is Arabinose import ATP-binding protein AraG.